A 164-amino-acid chain; its full sequence is Sperm axonemal maintenance protein CFAP97D1 (164 aa).

Residues 61–88 (LSKIQGEQKRIDKIEYENRQLCQKIANA) adopt a coiled-coil conformation.

Belongs to the CFAP97 family. As to expression, expressed exclusively in testis.

Functionally, required for male fertility through its role in axonemal doublet stabilization which is essential for sperm motility and fertilization. This chain is Sperm axonemal maintenance protein CFAP97D1 (Cfap97d1), found in Mus musculus (Mouse).